A 188-amino-acid polypeptide reads, in one-letter code: MATVSTNEFKGGLKLMLDNEPCVILENEYVKPGKGQAFNRVKIRKLLSGKVLEKTFKSGDTCEVADVMDIDLDYLYSDGEFYHFMNNETFEQIAADAKAVGENAKWLVENNTCMITLWNGNPITVTPPNFVELEVTDTDPGLKGDTQGTGGKPATLATGAVVRVPLFIAIGEVIKVDTRTGEYVGRVK.

The residue at position 34 (lysine 34) is an N6-(3,6-diaminohexanoyl)-5-hydroxylysine.

It belongs to the elongation factor P family. In terms of processing, may be beta-lysylated on the epsilon-amino group of Lys-34 by the combined action of EpmA and EpmB, and then hydroxylated on the C5 position of the same residue by EpmC (if this protein is present). Lysylation is critical for the stimulatory effect of EF-P on peptide-bond formation. The lysylation moiety may extend toward the peptidyltransferase center and stabilize the terminal 3-CCA end of the tRNA. Hydroxylation of the C5 position on Lys-34 may allow additional potential stabilizing hydrogen-bond interactions with the P-tRNA.

It is found in the cytoplasm. The protein operates within protein biosynthesis; polypeptide chain elongation. Its function is as follows. Involved in peptide bond synthesis. Alleviates ribosome stalling that occurs when 3 or more consecutive Pro residues or the sequence PPG is present in a protein, possibly by augmenting the peptidyl transferase activity of the ribosome. Modification of Lys-34 is required for alleviation. This chain is Elongation factor P, found in Vibrio parahaemolyticus serotype O3:K6 (strain RIMD 2210633).